A 104-amino-acid chain; its full sequence is uncharacterized protein (104 aa).

This sequence to M.jannaschii MJ1511.

This is an uncharacterized protein from Methanocaldococcus jannaschii (strain ATCC 43067 / DSM 2661 / JAL-1 / JCM 10045 / NBRC 100440) (Methanococcus jannaschii).